Reading from the N-terminus, the 318-residue chain is MQLFDLPLDQLQTYKPEKTAPKDFSEFWKLSLEELAKVQAEPDLQPVDYPADGVKVYRLTYKSFGNARITGWYAVPDKEGPHPAIVKYHGYNASYDGEIHEMVNWALHGYATFGMLVRGQQSSEDTSISPHGHALGWMTKGILDKDTYYYRGVYLDAVRALEVISSFDEVDETRIGVTGGSQGGGLTIAAAALSDIPKAAVADYPYLSNFERAIDVALEQPYLEINSFFRRNGSPETEVQAMKTLSYFDIMNLADRVKVPVLMSIGLIDKVTPPSTVFAAYNHLETKKELKVYRYFGHEYIPAFQTEKLAFFKQHLKG.

Residue tyrosine 91 coordinates substrate. Serine 181 (nucleophile) is an active-site residue. Active-site charge relay system residues include aspartate 269 and histidine 298.

Belongs to the carbohydrate esterase 7 family. In terms of assembly, homohexamer.

Its subcellular location is the cytoplasm. The catalysed reaction is Deacetylation of xylans and xylo-oligosaccharides.. It carries out the reaction cephalosporin C + H2O = deacetylcephalosporin C + acetate + H(+). Esterase that removed acetyl groups from a number of O-acetylated small substrates, such as acetylated xylose, short xylooligosaccharides and cephalosporin C. Has no activity towards polymeric acetylated xylan. Cannot cleave amide linkages. This chain is Cephalosporin-C deacetylase (cah), found in Bacillus subtilis (strain 168).